Reading from the N-terminus, the 691-residue chain is Threonine--tRNA ligase (691 aa).

A disordered region spans residues 1–22 (MSVPAQPAPGADGGDPRQPIRV). Positions 1–73 (MSVPAQPAPG…DADAEVTPIA (73 aa)) constitute a TGS domain. The interval 268–574 (DHRKLGVELD…LTEHYAGAFP (307 aa)) is catalytic. Zn(2+)-binding residues include cysteine 373, histidine 424, and histidine 551.

It belongs to the class-II aminoacyl-tRNA synthetase family. In terms of assembly, homodimer. Zn(2+) is required as a cofactor.

It localises to the cytoplasm. The enzyme catalyses tRNA(Thr) + L-threonine + ATP = L-threonyl-tRNA(Thr) + AMP + diphosphate + H(+). Functionally, catalyzes the attachment of threonine to tRNA(Thr) in a two-step reaction: L-threonine is first activated by ATP to form Thr-AMP and then transferred to the acceptor end of tRNA(Thr). Also edits incorrectly charged L-seryl-tRNA(Thr). This chain is Threonine--tRNA ligase, found in Mycobacterium marinum (strain ATCC BAA-535 / M).